The following is a 398-amino-acid chain: Enoyl-[acyl-carrier-protein] reductase [NADH] (398 aa).

NAD(+) contacts are provided by residues 48 to 53, 74 to 75, 111 to 112, and 139 to 140; these read GASTGY, FE, DA, and LA. Residue Tyr-225 coordinates substrate. The active-site Proton donor is Tyr-235. NAD(+) contacts are provided by residues Lys-244 and 273–275; that span reads VVT.

This sequence belongs to the TER reductase family. In terms of assembly, monomer.

It catalyses the reaction a 2,3-saturated acyl-[ACP] + NAD(+) = a (2E)-enoyl-[ACP] + NADH + H(+). It functions in the pathway lipid metabolism; fatty acid biosynthesis. Functionally, involved in the final reduction of the elongation cycle of fatty acid synthesis (FAS II). Catalyzes the reduction of a carbon-carbon double bond in an enoyl moiety that is covalently linked to an acyl carrier protein (ACP). In Paraburkholderia phytofirmans (strain DSM 17436 / LMG 22146 / PsJN) (Burkholderia phytofirmans), this protein is Enoyl-[acyl-carrier-protein] reductase [NADH].